The primary structure comprises 313 residues: tRNA-cytidine(32) 2-sulfurtransferase (313 aa).

A PP-loop motif motif is present at residues 46-51 (SGGKDS). The [4Fe-4S] cluster site is built by Cys-121, Cys-124, and Cys-212.

It belongs to the TtcA family. Homodimer. Mg(2+) serves as cofactor. It depends on [4Fe-4S] cluster as a cofactor.

The protein resides in the cytoplasm. It carries out the reaction cytidine(32) in tRNA + S-sulfanyl-L-cysteinyl-[cysteine desulfurase] + AH2 + ATP = 2-thiocytidine(32) in tRNA + L-cysteinyl-[cysteine desulfurase] + A + AMP + diphosphate + H(+). The protein operates within tRNA modification. Its function is as follows. Catalyzes the ATP-dependent 2-thiolation of cytidine in position 32 of tRNA, to form 2-thiocytidine (s(2)C32). The sulfur atoms are provided by the cysteine/cysteine desulfurase (IscS) system. This is tRNA-cytidine(32) 2-sulfurtransferase from Nitrosomonas eutropha (strain DSM 101675 / C91 / Nm57).